Consider the following 394-residue polypeptide: Elongation factor Tu (394 aa).

A tr-type G domain is found at Lys-10–Glu-204. Residues Gly-19–Thr-26 are G1. Gly-19–Thr-26 contributes to the GTP binding site. Mg(2+) is bound at residue Thr-26. Residues Gly-60–Asn-64 form a G2 region. The interval Asp-81 to Gly-84 is G3. Residues Asp-81–His-85 and Asn-136–Asp-139 contribute to the GTP site. The G4 stretch occupies residues Asn-136–Asp-139. The tract at residues Ser-174–Leu-176 is G5.

The protein belongs to the TRAFAC class translation factor GTPase superfamily. Classic translation factor GTPase family. EF-Tu/EF-1A subfamily. In terms of assembly, monomer.

The protein localises to the cytoplasm. It catalyses the reaction GTP + H2O = GDP + phosphate + H(+). GTP hydrolase that promotes the GTP-dependent binding of aminoacyl-tRNA to the A-site of ribosomes during protein biosynthesis. This chain is Elongation factor Tu, found in Shewanella pealeana (strain ATCC 700345 / ANG-SQ1).